Reading from the N-terminus, the 344-residue chain is Phosphate acyltransferase (344 aa).

The protein belongs to the PlsX family. Homodimer. Probably interacts with PlsY.

The protein resides in the cytoplasm. It carries out the reaction a fatty acyl-[ACP] + phosphate = an acyl phosphate + holo-[ACP]. Its pathway is lipid metabolism; phospholipid metabolism. Catalyzes the reversible formation of acyl-phosphate (acyl-PO(4)) from acyl-[acyl-carrier-protein] (acyl-ACP). This enzyme utilizes acyl-ACP as fatty acyl donor, but not acyl-CoA. This Blochmanniella floridana protein is Phosphate acyltransferase.